Consider the following 205-residue polypeptide: Adenylyl-sulfate kinase (205 aa).

ATP is bound at residue 39–46 (GLSGAGKS). Ser-113 functions as the Phosphoserine intermediate in the catalytic mechanism.

It belongs to the APS kinase family.

It catalyses the reaction adenosine 5'-phosphosulfate + ATP = 3'-phosphoadenylyl sulfate + ADP + H(+). It participates in sulfur metabolism; hydrogen sulfide biosynthesis; sulfite from sulfate: step 2/3. Its function is as follows. Catalyzes the synthesis of activated sulfate. This is Adenylyl-sulfate kinase from Vibrio parahaemolyticus serotype O3:K6 (strain RIMD 2210633).